The chain runs to 343 residues: Flap endonuclease 1 (343 aa).

The tract at residues 1–98 is N-domain; sequence MGVPIGELIP…KELEKRREAR (98 aa). 7 residues coordinate Mg(2+): aspartate 27, aspartate 80, glutamate 152, glutamate 154, aspartate 173, aspartate 175, and aspartate 236. Residues 116 to 258 form an I-domain region; sequence EARKYAQRAT…KALEIVKYSK (143 aa). The interval 330-338 is interaction with PCNA; that stretch reads KQSTLESWF.

The protein belongs to the XPG/RAD2 endonuclease family. FEN1 subfamily. Interacts with PCNA. PCNA stimulates the nuclease activity without altering cleavage specificity. Mg(2+) is required as a cofactor.

Its function is as follows. Structure-specific nuclease with 5'-flap endonuclease and 5'-3' exonuclease activities involved in DNA replication and repair. During DNA replication, cleaves the 5'-overhanging flap structure that is generated by displacement synthesis when DNA polymerase encounters the 5'-end of a downstream Okazaki fragment. Binds the unpaired 3'-DNA end and kinks the DNA to facilitate 5' cleavage specificity. Cleaves one nucleotide into the double-stranded DNA from the junction in flap DNA, leaving a nick for ligation. Also involved in the base excision repair (BER) pathway. Acts as a genome stabilization factor that prevents flaps from equilibrating into structures that lead to duplications and deletions. Also possesses 5'-3' exonuclease activity on nicked or gapped double-stranded DNA. The chain is Flap endonuclease 1 from Pyrococcus abyssi (strain GE5 / Orsay).